Consider the following 181-residue polypeptide: Endoribonuclease YbeY (181 aa).

Zn(2+)-binding residues include His-120, His-124, and His-130. A disordered region spans residues 157-181 (AGGKRPAGGADGADGAGEPGPTAAR). Positions 161–174 (RPAGGADGADGAGE) are enriched in gly residues.

This sequence belongs to the endoribonuclease YbeY family. Zn(2+) is required as a cofactor.

It localises to the cytoplasm. In terms of biological role, single strand-specific metallo-endoribonuclease involved in late-stage 70S ribosome quality control and in maturation of the 3' terminus of the 16S rRNA. The chain is Endoribonuclease YbeY from Frankia alni (strain DSM 45986 / CECT 9034 / ACN14a).